We begin with the raw amino-acid sequence, 242 residues long: Phosphoribosylaminoimidazole-succinocarboxamide synthase (242 aa).

The protein belongs to the SAICAR synthetase family.

It carries out the reaction 5-amino-1-(5-phospho-D-ribosyl)imidazole-4-carboxylate + L-aspartate + ATP = (2S)-2-[5-amino-1-(5-phospho-beta-D-ribosyl)imidazole-4-carboxamido]succinate + ADP + phosphate + 2 H(+). The protein operates within purine metabolism; IMP biosynthesis via de novo pathway; 5-amino-1-(5-phospho-D-ribosyl)imidazole-4-carboxamide from 5-amino-1-(5-phospho-D-ribosyl)imidazole-4-carboxylate: step 1/2. The sequence is that of Phosphoribosylaminoimidazole-succinocarboxamide synthase from Prochlorococcus marinus subsp. pastoris (strain CCMP1986 / NIES-2087 / MED4).